Here is a 199-residue protein sequence, read N- to C-terminus: CASP-like protein 4B1 (199 aa).

A disordered region spans residues 1–32 (MAMVASPDDIVKSPLPPPPPPPPPPLPPAHKD). Over 1-53 (MAMVASPDDIVKSPLPPPPPPPPPPLPPAHKDKAAYNPYSGCPAHGGDDGLDG) the chain is Cytoplasmic. Over residues 14-28 (PLPPPPPPPPPPLPP) the composition is skewed to pro residues. A helical membrane pass occupies residues 54–74 (IVLVLRAAAALLALVAMALVA). Residues 75–91 (SCRHGDWMEFTRYQEYR) lie on the Extracellular side of the membrane. A helical transmembrane segment spans residues 92–112 (YLLGVAVVASLYSALQAARTF). Residues 113–127 (RRMRAGTAYAATFLD) are Cytoplasmic-facing. The chain crosses the membrane as a helical span at residues 128–148 (FAGDQAVGYLLITASSAALPI). The Extracellular portion of the chain corresponds to 149-163 (TIRMRSAVVNTFTDV). A helical transmembrane segment spans residues 164–184 (VAASISFAFLAFAALAFSALI). Residues 185–199 (AGFRLSSSSSSAYNY) are Cytoplasmic-facing.

This sequence belongs to the Casparian strip membrane proteins (CASP) family. As to quaternary structure, homodimer and heterodimers.

The protein resides in the cell membrane. The chain is CASP-like protein 4B1 from Oryza sativa subsp. japonica (Rice).